The following is a 370-amino-acid chain: Ferrochelatase (370 aa).

Fe cation is bound by residues His210 and Glu291.

This sequence belongs to the ferrochelatase family.

The protein localises to the cytoplasm. The catalysed reaction is heme b + 2 H(+) = protoporphyrin IX + Fe(2+). The protein operates within porphyrin-containing compound metabolism; protoheme biosynthesis; protoheme from protoporphyrin-IX: step 1/1. Catalyzes the ferrous insertion into protoporphyrin IX. The sequence is that of Ferrochelatase from Marinobacter nauticus (strain ATCC 700491 / DSM 11845 / VT8) (Marinobacter aquaeolei).